Reading from the N-terminus, the 220-residue chain is Glycerol-3-phosphate acyltransferase (220 aa).

A run of 6 helical transmembrane segments spans residues 11 to 31 (INVIFTLLGYLIGGIPFGYAL), 70 to 90 (LLILILDLFKGMFAVFLSKLF), 96 to 116 (LQWMVAIASILGHCYSPFLNF), 127 to 147 (GSVVLLIPIESLIGLMVWFFV), 153 to 173 (ISSLASIVGVGTATILIFFVP), and 193 to 213 (MVLIFIFTLIKHVGNIFNLLA).

It belongs to the PlsY family. In terms of assembly, probably interacts with PlsX.

It is found in the cell inner membrane. The enzyme catalyses an acyl phosphate + sn-glycerol 3-phosphate = a 1-acyl-sn-glycero-3-phosphate + phosphate. The protein operates within lipid metabolism; phospholipid metabolism. Its function is as follows. Catalyzes the transfer of an acyl group from acyl-phosphate (acyl-PO(4)) to glycerol-3-phosphate (G3P) to form lysophosphatidic acid (LPA). This enzyme utilizes acyl-phosphate as fatty acyl donor, but not acyl-CoA or acyl-ACP. The chain is Glycerol-3-phosphate acyltransferase from Helicobacter acinonychis (strain Sheeba).